Consider the following 429-residue polypeptide: Citrate synthase, chromosomal (429 aa).

Active-site residues include H306 and D364.

This sequence belongs to the citrate synthase family.

It catalyses the reaction oxaloacetate + acetyl-CoA + H2O = citrate + CoA + H(+). It functions in the pathway carbohydrate metabolism; tricarboxylic acid cycle; isocitrate from oxaloacetate: step 1/2. In Rhizobium tropici, this protein is Citrate synthase, chromosomal (ccsA).